Reading from the N-terminus, the 606-residue chain is Vitamin B12 transporter BtuB (606 aa).

An N-terminal signal peptide occupies residues 1–22; that stretch reads MQKSLLAIAMASLLTPVSYLHA. The short motif at 29 to 36 is the TonB box element; sequence DTVVVTAN. In terms of domain architecture, TBDR plug spans 41–153; it reads PLAEVIASTT…IAGVINVITT (113 aa). In terms of domain architecture, TBDR beta-barrel spans 158–606; that stretch reads SEGSVVSLGA…RYFANLTYQF (449 aa). A TonB C-terminal box motif is present at residues 589-606; the sequence is LSYNAPERRYFANLTYQF.

The protein belongs to the TonB-dependent receptor family. BtuB (TC 1.B.14.3.1) subfamily.

It is found in the cell outer membrane. Its function is as follows. Involved in the active translocation of vitamin B12 (cyanocobalamin) across the outer membrane to the periplasmic space. It derives its energy for transport by interacting with the trans-periplasmic membrane protein TonB. In Vibrio vulnificus (strain CMCP6), this protein is Vitamin B12 transporter BtuB.